The chain runs to 785 residues: Uncoating factor OPG117 (785 aa).

Residue Asp170 is part of the active site. The segment at 342-469 (TERGDHIVWI…ELMNIINDIQ (128 aa)) is primase. An SF3 helicase domain is found at 477–639 (KNRELYEKTL…FSQPSGREAA (163 aa)). 503-510 (GETATGKS) contributes to the ATP binding site.

Belongs to the orthopoxvirus OPG117 family. Homomultimer; hexamer. Interacts with OPG148.

The protein localises to the host cytoplasm. Its function is as follows. Multifunctional protein required for genome uncoating and replication. Major viral uncoating protein that is required for the release of the viral genome from incoming viral cores containing the viral DNA genome. Possesses an ATPase activity that is required for hexamerization and uncoating. This is Uncoating factor OPG117 (OPG117) from Bos taurus (Bovine).